The primary structure comprises 848 residues: MSAVESPVIVTEPGSLKPQGLTQTATGGKFGAAATVKTTPTKAKPYVKPQNANNLQNNFNPRKIFTEYISKEETDAGIEDGSMFKGVLRINPKNYQECFLDHPKGTNHPDVLVLGQDRNRAMQGDVVAVKIKPKEDWLVNYVEYVKWWAEHKKGDRNSGKTDNNSPNKTEKRCLRNEIQDNGVTSDEVPDSCLITIGAIVHILEKKHFRVAAGKLQLMPNSANPNVLFVATDSRVPRILIPKSDVDKEFFSRPKDFERFLYTAKITDWRAESVYADGRLVKLLGMSGEIDTETERIVYEHQIDHREFSDECLESLPITTAENWKVPDAEFEYRRDFRSDIVFTIDPKTARDLDDALHAKHIDDCDGKGTPGLEIGVHIADVTFFLKEGTELDKWASERGNSTYLSQTVIPMLPRILCEQLCSLNPGVDRLSFSTVFKMSYEAELYDVWFGRSVIRSRVKLAYEHAQDFIENPEKDFTCDELPDISDGNTPFEIKEKTLMLHRIAQVLRQKREDSGALRIELPRLKFALDEDKKPQGVSIYEIKDSNKLVEEFMLLANMEVAKKIAENFPEHALLRNHPPPKEKMIKDVAEQCARIGFPLDGRTSGLLSTSLRKYQGKSRLDMCIRQVISSLTIKPMQQAKYFCTFEMPLSFYHHFALNVDHYTHFTSPIRRYPDVIVHRQLAAALGYNERSERVPEEIQEICTRCNDTKLASKEASDESAMLYFGVFIHQTGPMKCQAVVLGVMDLSFDVLIVEYGVVKRVYVDKMKRDFNKSTEKLTIYWPADPNAESGNREEFSSSIQMCNVVYVILVPYKSIEVSATIVRPSLEQRNILKSTLKDMKETGSTILQ.

Residues 153–173 (KGDRNSGKTDNNSPNKTEKRC) are disordered. Mg(2+) contacts are provided by Asp345 and Asp354.

Belongs to the RNR ribonuclease family. DIS3L2 subfamily. The cofactor is Mg(2+). Mn(2+) is required as a cofactor. Post-translationally, cleaved by caspase ced-3 in vitro.

It is found in the cytoplasm. Its subcellular location is the P-body. 3'-5'-exoribonuclease that specifically recognizes RNAs polyuridylated at their 3' end and mediates their degradation. Component of an exosome-independent RNA degradation pathway that mediates degradation of cytoplasmic mRNAs that have been deadenylated and subsequently uridylated at their 3'. The sequence is that of DIS3-like exonuclease 2 from Caenorhabditis elegans.